The primary structure comprises 659 residues: UvrABC system protein B (659 aa).

Residues 25–182 (QSIENGNRGQ…KKLIEIQYER (158 aa)) form the Helicase ATP-binding domain. Residue 38–45 (GVTGSGKT) coordinates ATP. Residues 91–114 (YYDYYQPEAYVPQTDTFIEKDASI) carry the Beta-hairpin motif. Residues 429 to 582 (QIDDLYGEIQ…QMEYNEEHNI (154 aa)) enclose the Helicase C-terminal domain. The 36-residue stretch at 622–657 (EKLIEQYEEEMKEAAKNLQFERAAELRDIIKDLKEN) folds into the UVR domain.

Belongs to the UvrB family. Forms a heterotetramer with UvrA during the search for lesions. Interacts with UvrC in an incision complex.

The protein localises to the cytoplasm. Its function is as follows. The UvrABC repair system catalyzes the recognition and processing of DNA lesions. A damage recognition complex composed of 2 UvrA and 2 UvrB subunits scans DNA for abnormalities. Upon binding of the UvrA(2)B(2) complex to a putative damaged site, the DNA wraps around one UvrB monomer. DNA wrap is dependent on ATP binding by UvrB and probably causes local melting of the DNA helix, facilitating insertion of UvrB beta-hairpin between the DNA strands. Then UvrB probes one DNA strand for the presence of a lesion. If a lesion is found the UvrA subunits dissociate and the UvrB-DNA preincision complex is formed. This complex is subsequently bound by UvrC and the second UvrB is released. If no lesion is found, the DNA wraps around the other UvrB subunit that will check the other stand for damage. The chain is UvrABC system protein B from Clostridium perfringens (strain ATCC 13124 / DSM 756 / JCM 1290 / NCIMB 6125 / NCTC 8237 / Type A).